The primary structure comprises 218 residues: Probable glutamine ABC transporter permease protein GlnP (218 aa).

Helical transmembrane passes span 19 to 39, 65 to 85, and 188 to 208; these read FLVTLYVAFISIILSFFFGLI, LPLLLIIFFTFFALPEIGIKL, and FFPIFLLAALMYFAVNYSLSL. The ABC transmembrane type-1 domain occupies 19–210; the sequence is FLVTLYVAFI…AVNYSLSLAA (192 aa).

Belongs to the binding-protein-dependent transport system permease family. The complex is composed of two ATP-binding proteins (GlnQ), two transmembrane proteins (GlnM and GlnP) and a solute-binding protein (GlnH).

It localises to the cell membrane. Functionally, part of the ABC transporter complex GlnHMPQ involved in glutamine transport. Probably responsible for the translocation of the substrate across the membrane. This Bacillus subtilis (strain 168) protein is Probable glutamine ABC transporter permease protein GlnP (glnP).